The primary structure comprises 117 residues: Large ribosomal subunit protein bL19 (117 aa).

This sequence belongs to the bacterial ribosomal protein bL19 family.

Functionally, this protein is located at the 30S-50S ribosomal subunit interface and may play a role in the structure and function of the aminoacyl-tRNA binding site. This is Large ribosomal subunit protein bL19 from Exiguobacterium sp. (strain ATCC BAA-1283 / AT1b).